The sequence spans 678 residues: Pentatricopeptide repeat-containing protein At5g39980, chloroplastic (678 aa).

The transit peptide at 1-64 (MYIEIASSSS…NKKVWRKQPE (64 aa)) directs the protein to the chloroplast. 14 PPR repeats span residues 154–188 (SVFA…ALAP), 189–223 (DRYT…RVSG), 224–258 (DLVL…GITP), 259–293 (DLVA…GVLP), 294–328 (NTVS…NCAL), 329–363 (DLTT…DIEP), 364–398 (NVVS…DIEQ), 399–433 (NVVT…GIEP), 434–468 (NAIT…GVEI), 469–503 (DQVL…DNIP), 535–569 (DISV…GYFP), 570–604 (DSNV…GCVF), 605–638 (PDEV…DPNV), and 639–674 (NSKE…GILK).

Belongs to the PPR family. P subfamily.

The protein resides in the plastid. Its subcellular location is the chloroplast. The protein is Pentatricopeptide repeat-containing protein At5g39980, chloroplastic of Arabidopsis thaliana (Mouse-ear cress).